We begin with the raw amino-acid sequence, 324 residues long: MGRPRRRGRDINGVLLLDKPLGLSSNDVLQKVKRLFSANRAGHTGALDPLATGMLPICLGEATKFSQFLLDSDKRYRVVARLGQRTDTSDAEGALISEREVNLTQAQIDTALESFRGESQQIPSMYSALKHQGKPLYEYARQGIEVEREARSITVYELLFIRWEGNDLELEIHCSKGTYIRTIIDDLGELLGCGAHVSYLRRLQVATYPSERMVTLEQLTAMVEAAQAEGRSPNPELDSLLLPMDSAVLNFPEVNLLPSVAAYVKQGQPVHVSGAPSEGMVRITEGKERNFIGIGTIAEDGRVAPKRLVVESVEVENLPVENKK.

Residue His43 coordinates substrate. Catalysis depends on Asp48, which acts as the Nucleophile. Tyr76, Tyr179, and Leu200 together coordinate substrate.

It belongs to the pseudouridine synthase TruB family. Type 1 subfamily.

The enzyme catalyses uridine(55) in tRNA = pseudouridine(55) in tRNA. Its function is as follows. Responsible for synthesis of pseudouridine from uracil-55 in the psi GC loop of transfer RNAs. The polypeptide is tRNA pseudouridine synthase B (Yersinia pestis bv. Antiqua (strain Nepal516)).